The following is a 2718-amino-acid chain: MFTTRKEVDAHVHKMLGKLQPGRERDIKGLAVARLYMKVQEYPKAIEYLNGYLRVRDDAVGHNMIATCYSRLNPPDVTEALQHYQRSIQIDPRQSEVVIDACELLVKENNASITECARYWLDQANSLDLSGNKQVFNLRMRVNLADSNGERDDTSGGDGEQNTLEILMYKELQARPQDVNIRIQLLRSYVEKMKIDQAFNYALKTELESKNCTSQSNEWYEQIWMVLFKIEMAKDVKKNWRFWHFALHTLDRLVQLSLEGSGLADSSKQLFRLDQYLFKFSTSIERSGDAPQRDLHQACIDHFTGQLLLHAVTLIFKREVLANKNKWMSTLRSALPLLLLGYQVRPIDDSSTNQWIKHCDAEQKQLIQMWRPQGAFRCAQLGRTLLGCLDRSQMEIKNDRENAEFDENKNSGNSMPGLFADSEELLASAHQQCLDKSWRSQIYQQLFTHAEHKLKDTSSHLVRNLRLQLPLFEWPNLAHIENYELQALVLPPHSLAQHVYLALGTDPNKLGDAPRVVFYEGFQRDVKQNLNYCGQDSISQVDVDLYLYATTIQTRRKLQIQREVYDSSNLGNRNAAARPHMMPFANLVGQLGAPEQSNWWDLVVRLNSNQLITEGNRAEQRAQLQHGLEAVRGVNGPKADAIIIFQLGKILNSRSDRSSLEARIDTLYRQGFSILRHQHNQQMESYVRVFKYGSAGSTAAWQDLQSLAEEAVTYFSEKMFRIGQYEQFLDEVRGLHLPMAYFLQSEACHHLEESSKLPRTSRDRYSERRRECLQKTQKLIKNDDKHPLIAAMHRHQQDRNSRGIDNSFGSPDVHNNSSAYEDAEDDFYSHAAFSANRSRRQLEVTPVTPIVMAQPSQEMEQAVKQISKSLCVLKDDVSVGMEAMRQDIKVLTEKFTGLEDLLKKIKISSRDTPTRDVDPAAALGLDDLFIIEDALAEHQQQQQHQQQQSHNQGAIHPVVPNPYTSGFYNGMPNTPSAQERFLQGPYGSPMFNQNQMYNYYAAQAQAQAQAQFLRTPPAPGSIPPPNMFGPRNPNFGLPSMFPPPTVPSVAPYIDAMGNFTQPPPSLIPPPAQPAAPPAPLNILESKPVVALPTPGFFNTTTPVFGASPIQVPQSKPLTVPTVPIPSTAPAPPIAGTVNPPATTAVPPPVHIPQVAPSVPAQPPAPAPVSVPSMFNRALNNQPVEKEPPANVVITSSDPLPKPTTASVQPTLSVTIPAQHIKPSLVQAPEQPAQSAQPAQPSVSGVGSLSFNFGSKSSESPFSFKTQVAKAAAEKQKEQEEAEQNQSGATDPNKTLPQDTSADDYDPRPDFKPIIPLPDEVEVRTGEEGEDIKFTSRAKLFRYVDKEWKERGTGVIKILCDKATGVSRVLMRRDQTHKVCANHTITADITINVANQDKDKKSLLWAANDFADEQVTLERFLVRFKTGELAEEFRVAFTKASEAAKSKETVKPTVNTAEKGSTATAPAAFKSFVTSTPAANSLINKPQEQTKTQPNPDPPATAAKSLFGTLSVSAAPATSAPASATPFASFSFTPNGSSGFGTSTASPFGNLSFGTASAVGSGNNTTLFTTALIKDNTVQGKTLQQESQLNKSNSSDAEEEYVPTAQFVPVIALPDIVEVVTGEENEDVLFEHRAKLLRWDKEANEWKERGLGNMKLLRDRTDPNKVRLLMRREQVHKLCCNQRLLPETKFTYATNCKAAVTWGAQDYSDEELTTALLAVRFKSQDICQQFLEAVQKAQQSIGNEPKKEEVPSAAGEKEKPIKGFGDAFKPKAGSWNCQACYTNNGQDQLYCLACQEPKDATVPPKQSGLDQGNALNLTTSSSNKFSFGFASSATLPATGGFSFGGATQPKEKPAVAVVTASASAPTSVQTAALGFGKSSMTSGFGDAFKPAVGSWSCSACYVNNPGESLYCSACDAPKNDTVPQKEKSLGSGLNLPPTSKFSFGFGAAAAGDKDQAGDGATFNFAAMPAAVAPTTSIGSSSFTFSMTKPKPDQQQPNSTAAKEDEDNDSQEVEEEENNTYFSPVIPLPDKIDVKTGEEDEELLYVHKAKLYRLNESDWKERGLGDVKILRHRQTKKLRVVMRREQVFKICLNHVLNENVVYREKTETSWMFAVHDFSEGESVLERFTLRFKNKEVAQGFMEAIKNALNETAKPIEDSPVVGSVSQSTEANKPSQKNDGAAKSRGGESEVLDVGKTSSVRPTTHEVIPPLPMTLPLLTLPQPLAKPNDYQTPATILFKGSSLSRNNSSASEASKTPSSAFIFGSTDKSEPGKDAGPLANLQKLASGEGQGNVLGSIFRSGSSNENSSDGSVKFFFGGGNKAAEQQKKDSSESVFGGNKADSQSPATQEAPKLAFGGIAAPVFGDANPFGGHKVNLQKSDGKEEPKSIIGGTPLLFGGSNAFGIPKIETQSPAKDFVFGSAPAFGQMATFSFTAAKNEKEKDITSNNTTDLKAEGKEKKELVPETTSTFADLAKTGSTFADLASNPGGTFADLANKTGNDFANLSANSQGTTVGFNKSAGGGFYNLTHQNAFKNFESPQATEECDDDGDATTDDNYDPHYDAIVELPDEIVVTTGEENETKLFGERAKLYRYDAESKQWKERGVGEIKVLEHPELQTFRLIMRQEQIHKLVLNMNISASLQMDYMNAQMKSFLWAGYNYAVDAEGKVDTEGVLERLACRFAKEEIASEFLNTVNSCIKRAKALQGDEENKNDDAPEEQASS.

A sufficient for interaction with Hsp83 region spans residues 1–100 (MFTTRKEVDA…DPRQSEVVID (100 aa)). The sufficient for interaction with piwi stretch occupies residues 1 to 200 (MFTTRKEVDA…EKMKIDQAFN (200 aa)). 2 TPR repeats span residues 26-58 (DIKGLAVARLYMKVQEYPKAIEYLNGYLRVRDD) and 59-94 (AVGHNMIATCYSRLNPPDVTEALQHYQRSIQIDPRQ). Disordered stretches follow at residues 796-816 (QQDRNSRGIDNSFGSPDVHNN) and 937-959 (EHQQQQQHQQQQSHNQGAIHPVV). The span at 803–816 (GIDNSFGSPDVHNN) shows a compositional bias: polar residues. Copy 1 of the repeat occupies 808–809 (FG). Positions 808-2581 (FGSPDVHNNS…GEENETKLFG (1774 aa)) are 27 X 2 AA repeats of F-G. Positions 938-948 (HQQQQQHQQQQ) are enriched in low complexity. 3 tandem repeats follow at residues 1028–1029 (FG), 1035–1036 (FG), and 1104–1105 (FG). The disordered stretch occupies residues 1181 to 1208 (QPVEKEPPANVVITSSDPLPKPTTASVQ). Polar residues predominate over residues 1192-1208 (VITSSDPLPKPTTASVQ). Repeat unit 5 spans residues 1252-1253 (FG). Disordered stretches follow at residues 1263–1314 (FKTQ…KPII) and 1483–1502 (NKPQEQTKTQPNPDPPATAA). The segment covering 1284–1299 (NQSGATDPNKTLPQDT) has biased composition (polar residues). Residues 1309-1445 (DFKPIIPLPD…FTKASEAAKS (137 aa)) form the RanBD1 1 domain. Residues 1483–1493 (NKPQEQTKTQP) are compositionally biased toward polar residues. 4 repeat units span residues 1506–1507 (FG), 1539–1540 (FG), 1547–1548 (FG), and 1552–1553 (FG). A RanBD1 2 domain is found at 1605 to 1742 (QFVPVIALPD…VQKAQQSIGN (138 aa)). Positions 1738–1761 (QSIGNEPKKEEVPSAAGEKEKPIK) are disordered. Residues 1743 to 1760 (EPKKEEVPSAAGEKEKPI) show a composition bias toward basic and acidic residues. Copy 10 of the repeat occupies 1763-1764 (FG). The RanBP2-type 1 zinc finger occupies 1770–1799 (KAGSWNCQACYTNNGQDQLYCLACQEPKDA). Tandem repeats lie at residues 1826-1827 (FG), 1842-1843 (FG), 1874-1875 (FG), and 1883-1884 (FG). The RanBP2-type 2 zinc-finger motif lies at 1890-1919 (AVGSWSCSACYVNNPGESLYCSACDAPKND). 2 tandem repeats follow at residues 1942 to 1943 (FG) and 1944 to 1945 (FG). Disordered regions lie at residues 1981 to 2021 (FTFS…TYFS), 2154 to 2204 (EDSP…THEV), and 2239 to 2273 (SLSRNNSSASEASKTPSSAFIFGSTDKSEPGKDAG). Residues 2002–2016 (EDEDNDSQEVEEEEN) show a composition bias toward acidic residues. The region spanning 2019 to 2151 (YFSPVIPLPD…IKNALNETAK (133 aa)) is the RanBD1 3 domain. Positions 2161-2175 (SVSQSTEANKPSQKN) are enriched in polar residues. Over residues 2239 to 2257 (SLSRNNSSASEASKTPSSA) the composition is skewed to low complexity. 11 repeat units span residues 2260–2261 (FG), 2313–2314 (FG), 2332–2333 (FG), 2352–2353 (FG), 2360–2361 (FG), 2366–2367 (FG), 2393–2394 (FG), 2399–2400 (FG), 2415–2416 (FG), 2421–2422 (FG), and 2580–2581 (FG). The tract at residues 2320 to 2346 (AEQQKKDSSESVFGGNKADSQSPATQE) is disordered. One can recognise a RanBD1 4 domain in the interval 2556 to 2699 (HYDAIVELPD…VNSCIKRAKA (144 aa)).

The protein belongs to the RanBP2 E3 ligase family. In terms of assembly, part of the nuclear pore complex. Forms a complex with Nxt1, sbr/Nxf1 and RanGAP. Interacts (via TPR repeats) with Hsp83; the interaction is required for the nuclear import of the sesquiterpenoid juvenile hormone receptor Met. Interacts (via N-terminus) with piwi. Expressed in both oocytes and nurse cells (at protein level).

It is found in the nucleus. The protein resides in the nuclear pore complex. In terms of biological role, E3 SUMO-protein ligase. Component of the nuclear pore complex (NPC), a complex required for trafficking across the nuclear envelope. Required for nuclear import of nuclear localization signal (NLS)-containing proteins in an importin alpha/importin beta-dependent manner, but also for the nuclear import of specific proteins such as phosphorylated Mad or the sesquiterpenoid juvenile hormone receptor Met as part of the juvenile hormone signal transduction pathway. Plays a role in nuclear mRNA export by recruiting the mRNA transport complex composed of Nxt1 and sbr/Nxf1 to the NPC. Essential during germline development for transposon silencing and piRNA biogenesis probably by regulating piwi localization to the nucleus. During oogenesis, required to form granules that modulate the biogenesis of annulate lamellae containing nuclear pore complex components. This chain is E3 SUMO-protein ligase RanBP2, found in Drosophila melanogaster (Fruit fly).